Consider the following 308-residue polypeptide: Rhamnose-binding lectin (308 aa).

Positions 1 to 23 (MMLILKLSLLSLLIATPGLLVSG) are cleaved as a signal peptide. SUEL-type lectin domains are found at residues 27–115 (ITCY…SFDC), 123–213 (ICEH…YICT), and 218–308 (VCEG…YACV). An N-linked (GlcNAc...) asparagine glycan is attached at N110.

In terms of assembly, homotrimer. As to expression, expressed in eggs, but not in liver.

The protein resides in the secreted. Its function is as follows. Lectin that binds L-rhamnose. Also binds monosaccharides possessing steric similarity to the hydroxyl group orientation at C2 and C4 of the pyranose ring structure of L-rhamnose, such as L-mannose and L-lyxose. This is Rhamnose-binding lectin from Silurus asotus (Amur catfish).